The chain runs to 1577 residues: Disco-interacting protein 2 homolog B-A (1577 aa).

The DMAP1-binding domain occupies 7–124 (DLAALPKEVR…PMPTKRRSAF (118 aa)). 4 disordered regions span residues 109–148 (EEKM…GSLR), 173–204 (VQGS…QGQT), 217–239 (DTNS…DRNS), and 253–273 (SRGQ…AHSR). A compositionally biased stretch (polar residues) spans 124-140 (FVQSPAENCTPPDTSSA). Low complexity predominate over residues 176–187 (SSTSSSASSTLS). Residues 217-236 (DTNSSSGSVPPDVTSTAPQD) show a composition bias toward polar residues.

It belongs to the DIP2 family.

Its subcellular location is the cell projection. It localises to the dendrite. The protein localises to the axon. The protein resides in the perikaryon. Functionally, negatively regulates axonal outgrowth and is essential for normal synaptic transmission. Not required for regulation of axon polarity. Promotes acetylation of alpha-tubulin. The chain is Disco-interacting protein 2 homolog B-A (dip2ba) from Danio rerio (Zebrafish).